A 429-amino-acid polypeptide reads, in one-letter code: Serum response factor-binding protein 1 (429 aa).

A2 carries the post-translational modification N-acetylalanine. 2 coiled-coil regions span residues K42–E67 and L108–E146. Disordered stretches follow at residues A131–N157 and L176–D429. The segment covering E146–N157 has biased composition (polar residues). Basic and acidic residues predominate over residues N183–P195. K190 participates in a covalent cross-link: Glycyl lysine isopeptide (Lys-Gly) (interchain with G-Cter in SUMO2). Phosphoserine is present on residues S203, S205, S264, S279, and S281. Over residues G249 to T265 the composition is skewed to acidic residues. Basic and acidic residues predominate over residues K296–E341. K316 participates in a covalent cross-link: Glycyl lysine isopeptide (Lys-Gly) (interchain with G-Cter in SUMO2). S349, S351, and S367 each carry phosphoserine. Basic and acidic residues predominate over residues N357 to S367. The span at N373–K383 shows a compositional bias: polar residues.

In terms of assembly, interacts with SRF. Forms complexes with SRF and SRF cofactors ARID2, MYOCD and NKX2-5. Interacts with the N-terminus of SLC2A4. Abundantly expressed in heart and skeletal muscle, and at much lower levels in brain and lung.

The protein resides in the cytoplasm. It is found in the perinuclear region. In terms of biological role, may be involved in regulating transcriptional activation of cardiac genes during the aging process. May play a role in biosynthesis and/or processing of SLC2A4 in adipose cells. This chain is Serum response factor-binding protein 1, found in Homo sapiens (Human).